Here is a 199-residue protein sequence, read N- to C-terminus: Hematopoietic prostaglandin D synthase (199 aa).

One can recognise a GST N-terminal domain in the interval 2–79 (PNYKLLYFNM…YLTKNTDLAG (78 aa)). Glutathione-binding positions include Y8, R14, W39, 49-51 (GKI), and 63-64 (QS). Residues 81-199 (TELEQCQVDA…WILKRPQTKL (119 aa)) enclose the GST C-terminal domain.

This sequence belongs to the GST superfamily. Sigma family. As to quaternary structure, homodimer. Glutathione is required as a cofactor. As to expression, highly expressed in spleen and bone marrow. Lower levels of expression in small intestine, colon, liver, pancreas and skin. Not detected in brain, heart, lung or kidney (at protein level).

Its subcellular location is the cytoplasm. The catalysed reaction is prostaglandin H2 = prostaglandin D2. It carries out the reaction RX + glutathione = an S-substituted glutathione + a halide anion + H(+). It catalyses the reaction 2-glyceryl-prostaglandin H2 = 2-glyceryl-prostaglandin D2. Its function is as follows. Bifunctional enzyme which catalyzes both the conversion of PGH2 to PGD2, a prostaglandin involved in smooth muscle contraction/relaxation and a potent inhibitor of platelet aggregation, and the conjugation of glutathione with a wide range of aryl halides and organic isothiocyanates. Also exhibits low glutathione-peroxidase activity towards cumene hydroperoxide. The polypeptide is Hematopoietic prostaglandin D synthase (Rattus norvegicus (Rat)).